We begin with the raw amino-acid sequence, 321 residues long: Glucokinase (321 aa).

Residue 8-13 (ADIGGT) participates in ATP binding.

Belongs to the bacterial glucokinase family.

The protein resides in the cytoplasm. It catalyses the reaction D-glucose + ATP = D-glucose 6-phosphate + ADP + H(+). The chain is Glucokinase from Photorhabdus laumondii subsp. laumondii (strain DSM 15139 / CIP 105565 / TT01) (Photorhabdus luminescens subsp. laumondii).